The sequence spans 225 residues: J-type co-chaperone jac1, mitochondrial (225 aa).

The transit peptide at 1–49 directs the protein to the mitochondrion; sequence MLKQAGNQSFRPFISFAQKSLFNRQITGNHWIFARFKFYPLNKIVNYNH. The J domain maps to 61–137; it reads NFYKQFEGDI…LTRAEYILQL (77 aa). An HSP70 binding motif is present at residues 98–100; it reads HPD.

It belongs to the HscB family. Interacts with ssc1.

The protein localises to the mitochondrion matrix. Functionally, co-chaperone required for the assembly of iron-sulfur (Fe/S) clusters in mitochondria. Stimulates the ATPase activity of the mitochondrial Hsp70 chaperone ssc1, to mediate the transfer of iron-sulfur clusters from isu1 to grx5. This Schizosaccharomyces pombe (strain 972 / ATCC 24843) (Fission yeast) protein is J-type co-chaperone jac1, mitochondrial.